The following is a 740-amino-acid chain: Putative Pol polyprotein from transposon element Bs1 (740 aa).

The stretch at 469-503 is one PPR repeat; the sequence is TAVAHNLLVQALFMDGRASDAYVVLEEMQNNGPFP.

Its function is as follows. Bs1 is probably an active plant retrotransposon. This is Putative Pol polyprotein from transposon element Bs1 from Zea mays (Maize).